Here is a 316-residue protein sequence, read N- to C-terminus: Pantothenate kinase (316 aa).

95–102 contacts ATP; the sequence is GSVAVGKS.

It belongs to the prokaryotic pantothenate kinase family.

It is found in the cytoplasm. The catalysed reaction is (R)-pantothenate + ATP = (R)-4'-phosphopantothenate + ADP + H(+). It participates in cofactor biosynthesis; coenzyme A biosynthesis; CoA from (R)-pantothenate: step 1/5. The protein is Pantothenate kinase of Shewanella loihica (strain ATCC BAA-1088 / PV-4).